An 864-amino-acid chain; its full sequence is Mitochondrial 15S rRNA processing factor CCM1 (864 aa).

A mitochondrion-targeting transit peptide spans 1–76 (MYMARCGPKN…REFSNTLKER (76 aa)). Polar residues-rich tracts occupy residues 80 to 94 (TKSV…NSIA) and 102 to 112 (NVNVTKTSSVP). Positions 80-117 (TKSVNSDGHQSNSIAPISEDSRNVNVTKTSSVPNEEKS) are disordered. 2 PPR repeats span residues 319–353 (NKQN…STKH) and 356–390 (DICT…NIKP).

Belongs to the CCM1 family. Binds to mitochondrial small subunit 15S rRNA.

The protein resides in the mitochondrion. In terms of biological role, regulates mitochondrial small subunit maturation by controlling 15S rRNA 5'-end processing. Localizes to the 5' precursor of the 15S rRNA in a position that is subsequently occupied by mS47 in the mature yeast mtSSU. Uses structure and sequence-specific RNA recognition, binding to a single-stranded region of the precursor and specifically recognizing bases -6 to -1. The exchange of Ccm1 for mS47 is coupled to the irreversible removal of precursor rRNA that is accompanied by conformational changes of the mitoribosomal proteins uS5m and mS26. These conformational changes signal completion of 5'-end rRNA processing through protection of the mature 5'-end of the 15S rRNA and stabilization of mS47. The removal of the 5' precursor together with the dissociation of Ccm1 may be catalyzed by the 5'-3' exoribonuclease Pet127. Involved in the specific removal of group I introns in mitochondrial encoded transcripts. The polypeptide is Mitochondrial 15S rRNA processing factor CCM1 (Saccharomyces cerevisiae (strain ATCC 204508 / S288c) (Baker's yeast)).